The following is a 62-amino-acid chain: Potassium channel toxin alpha-KTx 10.1 (62 aa).

Positions 1-22 (MEGIAKITLILLFLFVTMHTFA) are cleaved as a signal peptide. Residues 23–28 (NWNTEA) constitute a propeptide that is removed on maturation. 3 cysteine pairs are disulfide-bonded: Cys-31–Cys-50, Cys-36–Cys-55, and Cys-40–Cys-57. Tyrosine amide is present on Tyr-60.

Belongs to the short scorpion toxin superfamily. Potassium channel inhibitor family. Alpha-KTx 10 subfamily. As to expression, expressed by the venom gland.

It localises to the secreted. Its function is as follows. Blocks Shaker B (Sh) and voltage-gated potassium-channels Kv1.1/KCNA1, Kv1.2/KCNA2, Kv1.3/KCNA3. Also inhibits small conductance calcium-activated potassium channels (KCNN) and intermediate conductance calcium-activated potassium channel (KCa3.1/KCNN4). This chain is Potassium channel toxin alpha-KTx 10.1, found in Centruroides noxius (Mexican scorpion).